The following is a 237-amino-acid chain: UPF0502 protein RB6530 (237 aa).

The span at 187–202 (ASSAAPSQAESGSTSP) shows a compositional bias: polar residues. The disordered stretch occupies residues 187-211 (ASSAAPSQAESGSTSPAKAANDDRI).

The protein belongs to the UPF0502 family.

The protein is UPF0502 protein RB6530 of Rhodopirellula baltica (strain DSM 10527 / NCIMB 13988 / SH1).